The chain runs to 608 residues: MRILLIHSDYLNYNVKNKTPVAEEIEDAKKQGAFDESLVVFTAVEKDDENNPQGIVKNLVKEVIKTNDQVKAENIVLYPYAHLSSSLSSPKVAVQVLKDAEEALDAEGLNVKRVPFGWYKAFEISCKGHPLSELSRTITAEEEEEEEVEKKPSSWSILDGDKIIDIDDFKFENDQLEKLVSYELGTGASDAGEPPHVKLMREKELCDYESASDVGNLKWFPKGRLVRDLLADYVYNLVVDQGAMPIETPIFYDLDNEAINVHAAKFGERQYRTDTKKNLMLRFACCFGAFRVMADPFITWKNLPAKLYELSTYSFRFEKKGEVVGLKRLRAFTMPDFHSFCADMNSTLEEFSKQTDMCIQTGVDLDVNYEIIFRATKDFYDENKDWMYSIGKKIGKPVLLEILPERKHYWSCKIDFAAIDYLGRPIENPTVQIDVESGKRFDITYLGEDGKEHYPTILHCSPTGSIERVICSLLEKTAIELDEKAPMLPTWLSPIEVRIITVGEDHKDFANELYDKINAENIRVDVDDRDESVGKKIRNAATEWIPYIFVVGDNEKESGVFSVTVRETGEKVDMTVDELIKEILDKTKGMPYRGLPLPKDISTRINFQ.

The interval 1 to 144 is editing domain; it reads MRILLIHSDY…SRTITAEEEE (144 aa). A catalytic region spans residues 195–489; the sequence is PHVKLMREKE…ELDEKAPMLP (295 aa). The Zn(2+) site is built by Cys-286, His-338, and His-459.

The protein belongs to the class-II aminoacyl-tRNA synthetase family. As to quaternary structure, homodimer. Zn(2+) serves as cofactor.

It localises to the cytoplasm. It catalyses the reaction tRNA(Thr) + L-threonine + ATP = L-threonyl-tRNA(Thr) + AMP + diphosphate + H(+). Catalyzes the attachment of threonine to tRNA(Thr) in a two-step reaction: L-threonine is first activated by ATP to form Thr-AMP and then transferred to the acceptor end of tRNA(Thr). Also edits incorrectly charged L-seryl-tRNA(Thr). This Methanobrevibacter smithii (strain ATCC 35061 / DSM 861 / OCM 144 / PS) protein is Threonine--tRNA ligase.